Consider the following 129-residue polypeptide: Small ribosomal subunit protein uS8 (129 aa).

Belongs to the universal ribosomal protein uS8 family. In terms of assembly, part of the 30S ribosomal subunit. Contacts proteins S5 and S12.

Functionally, one of the primary rRNA binding proteins, it binds directly to 16S rRNA central domain where it helps coordinate assembly of the platform of the 30S subunit. The chain is Small ribosomal subunit protein uS8 from Mycoplasma mycoides subsp. mycoides SC (strain CCUG 32753 / NCTC 10114 / PG1).